A 521-amino-acid chain; its full sequence is MLAKGLPPRSVLVKGCQTFLSAPREGLGRLRVPTGEGAGISTRSPRPFNEIPSPGDNGWLNLYHFWRETGTHKVHLHHVQNFQKYGPIYREKLGNVESVYVIDPEDVALLFKSEGPNPERFLIPPWVAYHQYYQRPIGVLLKKSAAWKKDRVALNQEVMAPEATKNFLPLLDAVSRDFVSVLHRRIKKAGSGNYSGDISDDLFRFAFESITNVIFGERQGMLEEVVNPEAQRFIDAIYQMFHTSVPMLNLPPDLFRLFRTKTWKDHVAAWDVIFSKADIYTQNFYWELRQKGSVHHDYRGILYRLLGDSKMSFEDIKANVTEMLAGGVDTTSMTLQWHLYEMARNLKVQDMLRAEVLAARHQAQGDMATMLQLVPLLKASIKETLRLHPISVTLQRYLVNDLVLRDYMIPAKTLVQVAIYALGREPTFFFDPENFDPTRWLSKDKNITYFRNLGFGWGVRQCLGRRIAELEMTIFLINMLENFRVEIQHLSDVGTTFNLILMPEKPISFTFWPFNQEATQQ.

Residues 1 to 39 constitute a mitochondrion transit peptide; sequence MLAKGLPPRSVLVKGCQTFLSAPREGLGRLRVPTGEGAG. Residue Cys-462 coordinates heme.

The protein belongs to the cytochrome P450 family. Interacts with FDX1/adrenodoxin. Heme serves as cofactor.

It is found in the mitochondrion inner membrane. The enzyme catalyses 6 reduced [adrenodoxin] + cholesterol + 3 O2 + 6 H(+) = 4-methylpentanal + pregnenolone + 6 oxidized [adrenodoxin] + 4 H2O. The catalysed reaction is 2 reduced [adrenodoxin] + cholesterol + O2 + 2 H(+) = (22R)-hydroxycholesterol + 2 oxidized [adrenodoxin] + H2O. It carries out the reaction (22R)-hydroxycholesterol + 2 reduced [adrenodoxin] + O2 + 2 H(+) = (20R,22R)-20,22-dihydroxycholesterol + 2 oxidized [adrenodoxin] + H2O. It catalyses the reaction (20R,22R)-20,22-dihydroxycholesterol + 2 reduced [adrenodoxin] + O2 + 2 H(+) = 4-methylpentanal + pregnenolone + 2 oxidized [adrenodoxin] + 2 H2O. Its pathway is lipid metabolism; C21-steroid hormone metabolism. It participates in steroid metabolism; cholesterol metabolism. Its function is as follows. A cytochrome P450 monooxygenase that catalyzes the side-chain hydroxylation and cleavage of cholesterol to pregnenolone, the precursor of most steroid hormones. Catalyzes three sequential oxidation reactions of cholesterol, namely the hydroxylation at C22 followed with the hydroxylation at C20 to yield 20R,22R-hydroxycholesterol that is further cleaved between C20 and C22 to yield the C21-steroid pregnenolone and 4-methylpentanal. Mechanistically, uses molecular oxygen inserting one oxygen atom into a substrate and reducing the second into a water molecule. Two electrons are provided by NADPH via a two-protein mitochondrial transfer system comprising flavoprotein FDXR (adrenodoxin/ferredoxin reductase) and nonheme iron-sulfur protein FDX1 or FDX2 (adrenodoxin/ferredoxin). The chain is Cholesterol side-chain cleavage enzyme, mitochondrial from Homo sapiens (Human).